Here is a 427-residue protein sequence, read N- to C-terminus: 3-phosphoshikimate 1-carboxyvinyltransferase (427 aa).

Residues Lys-22, Ser-23, and Arg-27 each coordinate 3-phosphoshikimate. Residue Lys-22 participates in phosphoenolpyruvate binding. Positions 96 and 124 each coordinate phosphoenolpyruvate. The 3-phosphoshikimate site is built by Ser-169, Ser-170, Gln-171, Ser-197, Asp-313, Asn-336, and Lys-340. Gln-171 provides a ligand contact to phosphoenolpyruvate. The Proton acceptor role is filled by Asp-313. 3 residues coordinate phosphoenolpyruvate: Arg-344, Arg-386, and Lys-411.

It belongs to the EPSP synthase family. In terms of assembly, monomer.

Its subcellular location is the cytoplasm. It carries out the reaction 3-phosphoshikimate + phosphoenolpyruvate = 5-O-(1-carboxyvinyl)-3-phosphoshikimate + phosphate. It participates in metabolic intermediate biosynthesis; chorismate biosynthesis; chorismate from D-erythrose 4-phosphate and phosphoenolpyruvate: step 6/7. Its function is as follows. Catalyzes the transfer of the enolpyruvyl moiety of phosphoenolpyruvate (PEP) to the 5-hydroxyl of shikimate-3-phosphate (S3P) to produce enolpyruvyl shikimate-3-phosphate and inorganic phosphate. The sequence is that of 3-phosphoshikimate 1-carboxyvinyltransferase from Salmonella choleraesuis (strain SC-B67).